The following is a 231-amino-acid chain: 2-C-methyl-D-erythritol 4-phosphate cytidylyltransferase (231 aa).

It belongs to the IspD/TarI cytidylyltransferase family. IspD subfamily.

The enzyme catalyses 2-C-methyl-D-erythritol 4-phosphate + CTP + H(+) = 4-CDP-2-C-methyl-D-erythritol + diphosphate. It participates in isoprenoid biosynthesis; isopentenyl diphosphate biosynthesis via DXP pathway; isopentenyl diphosphate from 1-deoxy-D-xylulose 5-phosphate: step 2/6. Its function is as follows. Catalyzes the formation of 4-diphosphocytidyl-2-C-methyl-D-erythritol from CTP and 2-C-methyl-D-erythritol 4-phosphate (MEP). This chain is 2-C-methyl-D-erythritol 4-phosphate cytidylyltransferase, found in Lysinibacillus sphaericus (strain C3-41).